Reading from the N-terminus, the 281-residue chain is Glycerol uptake facilitator protein (281 aa).

Residues 1–5 (MSQTS) lie on the Cytoplasmic side of the membrane. Residues 6–34 (TLKGQCIAEFLGTGLLIFFGVGCVAALKV) form a helical membrane-spanning segment. Over 35-39 (AGASF) the chain is Periplasmic. A helical membrane pass occupies residues 40–60 (GQWEISVIWGLGVAMAIYLTA). Residues 61-63 (GVS) are Cytoplasmic-facing. Residues 64-67 (GAHL) lie within the membrane without spanning it. The NPA 1 motif lies at 68 to 70 (NPA). The segment at residues 68–78 (NPAVTIALWLF) is an intramembrane region (helical). Residues 79–84 (ACFDKR) are Cytoplasmic-facing. The chain crosses the membrane as a helical span at residues 85–108 (KVIPFIVSQVAGAFCAAALVYGLY). The Periplasmic portion of the chain corresponds to 109-143 (YNLFFDFEQTHHIVRGSVESVDLAGTFSTYPNPHI). Residues 144 to 169 (NFVQAFAVEMVITAILMGLILALTDD) traverse the membrane as a helical segment. At 170 to 177 (GNGVPRGP) the chain is on the cytoplasmic side. Residues 178–194 (LAPLLIGLLIAVIGASM) form a helical membrane-spanning segment. Topologically, residues 195–198 (GPLT) are periplasmic. The stretch at 199 to 202 (GFAM) is an intramembrane region. The NPA 2 motif lies at 203 to 205 (NPA). Positions 203-216 (NPARDFGPKVFAWL) form an intramembrane region, helical. The Periplasmic portion of the chain corresponds to 217-231 (AGWGNVAFTGGRDIP). A helical membrane pass occupies residues 232-254 (YFLVPLFSPIVGAIVGAFAYRKL). The Cytoplasmic segment spans residues 255–281 (IGRHLPCDICVVEEKETTTPSEQKASL).

It belongs to the MIP/aquaporin (TC 1.A.8) family. As to quaternary structure, homotetramer.

It is found in the cell inner membrane. It carries out the reaction glycerol(in) = glycerol(out). Mediates glycerol diffusion across the cytoplasmic membrane via a pore-type mechanism. This chain is Glycerol uptake facilitator protein (glpF), found in Shigella flexneri.